Consider the following 860-residue polypeptide: DNA mismatch repair protein MutS (860 aa).

Residue 606 to 613 (GPNMSGKS) participates in ATP binding.

It belongs to the DNA mismatch repair MutS family.

In terms of biological role, this protein is involved in the repair of mismatches in DNA. It is possible that it carries out the mismatch recognition step. This protein has a weak ATPase activity. The protein is DNA mismatch repair protein MutS of Geobacillus sp. (strain WCH70).